The primary structure comprises 141 residues: Large ribosomal subunit protein uL11 (141 aa).

It belongs to the universal ribosomal protein uL11 family. As to quaternary structure, part of the ribosomal stalk of the 50S ribosomal subunit. Interacts with L10 and the large rRNA to form the base of the stalk. L10 forms an elongated spine to which L12 dimers bind in a sequential fashion forming a multimeric L10(L12)X complex. Post-translationally, one or more lysine residues are methylated.

Its function is as follows. Forms part of the ribosomal stalk which helps the ribosome interact with GTP-bound translation factors. This Dinoroseobacter shibae (strain DSM 16493 / NCIMB 14021 / DFL 12) protein is Large ribosomal subunit protein uL11.